Here is a 129-residue protein sequence, read N- to C-terminus: Small ribosomal subunit protein uS11 (129 aa).

The protein belongs to the universal ribosomal protein uS11 family. Part of the 30S ribosomal subunit. Interacts with proteins S7 and S18. Binds to IF-3.

Functionally, located on the platform of the 30S subunit, it bridges several disparate RNA helices of the 16S rRNA. Forms part of the Shine-Dalgarno cleft in the 70S ribosome. In Bartonella tribocorum (strain CIP 105476 / IBS 506), this protein is Small ribosomal subunit protein uS11.